The primary structure comprises 96 residues: UPF0235 protein NT01EI_0281 (96 aa).

The protein belongs to the UPF0235 family.

The polypeptide is UPF0235 protein NT01EI_0281 (Edwardsiella ictaluri (strain 93-146)).